A 242-amino-acid polypeptide reads, in one-letter code: Uridylate kinase (242 aa).

12 to 15 (KLSG) is a binding site for ATP. Residues 20 to 25 (GEKGYG) are involved in allosteric activation by GTP. G55 provides a ligand contact to UMP. Positions 56 and 60 each coordinate ATP. UMP contacts are provided by residues D75 and 136-143 (TGNPYFST). ATP is bound by residues Y169 and D172.

This sequence belongs to the UMP kinase family. Homohexamer.

It is found in the cytoplasm. It catalyses the reaction UMP + ATP = UDP + ADP. The protein operates within pyrimidine metabolism; CTP biosynthesis via de novo pathway; UDP from UMP (UMPK route): step 1/1. Allosterically activated by GTP. Inhibited by UTP. In terms of biological role, catalyzes the reversible phosphorylation of UMP to UDP. The sequence is that of Uridylate kinase from Carboxydothermus hydrogenoformans (strain ATCC BAA-161 / DSM 6008 / Z-2901).